Reading from the N-terminus, the 250-residue chain is Triosephosphate isomerase (250 aa).

Residue 9 to 11 (NWK) coordinates substrate. The active-site Electrophile is histidine 96. The active-site Proton acceptor is the glutamate 166. Residues glycine 172, serine 212, and 233–234 (GG) each bind substrate.

Belongs to the triosephosphate isomerase family. In terms of assembly, homodimer.

It localises to the cytoplasm. It catalyses the reaction D-glyceraldehyde 3-phosphate = dihydroxyacetone phosphate. The protein operates within carbohydrate biosynthesis; gluconeogenesis. It participates in carbohydrate degradation; glycolysis; D-glyceraldehyde 3-phosphate from glycerone phosphate: step 1/1. In terms of biological role, involved in the gluconeogenesis. Catalyzes stereospecifically the conversion of dihydroxyacetone phosphate (DHAP) to D-glyceraldehyde-3-phosphate (G3P). The protein is Triosephosphate isomerase of Chlorobium phaeobacteroides (strain BS1).